Consider the following 450-residue polypeptide: Phosphoglucosamine mutase (450 aa).

Catalysis depends on serine 101, which acts as the Phosphoserine intermediate. Positions 101, 242, 244, and 246 each coordinate Mg(2+). Serine 101 carries the post-translational modification Phosphoserine.

Belongs to the phosphohexose mutase family. It depends on Mg(2+) as a cofactor. Post-translationally, activated by phosphorylation.

It carries out the reaction alpha-D-glucosamine 1-phosphate = D-glucosamine 6-phosphate. Its function is as follows. Catalyzes the conversion of glucosamine-6-phosphate to glucosamine-1-phosphate. This chain is Phosphoglucosamine mutase, found in Rhodopseudomonas palustris (strain TIE-1).